The sequence spans 342 residues: Anthranilate phosphoribosyltransferase (342 aa).

5-phospho-alpha-D-ribose 1-diphosphate-binding positions include Gly-81, 84–85, Thr-89, 91–94, 109–117, and Ala-121; these read GD, NVST, and KHGNRAASS. Gly-81 is a binding site for anthranilate. Ser-93 is a Mg(2+) binding site. Residue Asn-112 participates in anthranilate binding. Arg-167 is a binding site for anthranilate. Mg(2+) contacts are provided by Asp-226 and Glu-227.

The protein belongs to the anthranilate phosphoribosyltransferase family. Homodimer. Requires Mg(2+) as cofactor.

It catalyses the reaction N-(5-phospho-beta-D-ribosyl)anthranilate + diphosphate = 5-phospho-alpha-D-ribose 1-diphosphate + anthranilate. It participates in amino-acid biosynthesis; L-tryptophan biosynthesis; L-tryptophan from chorismate: step 2/5. Its function is as follows. Catalyzes the transfer of the phosphoribosyl group of 5-phosphorylribose-1-pyrophosphate (PRPP) to anthranilate to yield N-(5'-phosphoribosyl)-anthranilate (PRA). The protein is Anthranilate phosphoribosyltransferase of Beijerinckia indica subsp. indica (strain ATCC 9039 / DSM 1715 / NCIMB 8712).